A 217-amino-acid polypeptide reads, in one-letter code: Probable transaldolase (217 aa).

K85 acts as the Schiff-base intermediate with substrate in catalysis.

The protein belongs to the transaldolase family. Type 3B subfamily.

The protein resides in the cytoplasm. It carries out the reaction D-sedoheptulose 7-phosphate + D-glyceraldehyde 3-phosphate = D-erythrose 4-phosphate + beta-D-fructose 6-phosphate. It functions in the pathway carbohydrate degradation; pentose phosphate pathway; D-glyceraldehyde 3-phosphate and beta-D-fructose 6-phosphate from D-ribose 5-phosphate and D-xylulose 5-phosphate (non-oxidative stage): step 2/3. Its function is as follows. Transaldolase is important for the balance of metabolites in the pentose-phosphate pathway. The chain is Probable transaldolase from Agathobacter rectalis (strain ATCC 33656 / DSM 3377 / JCM 17463 / KCTC 5835 / VPI 0990) (Eubacterium rectale).